Here is a 92-residue protein sequence, read N- to C-terminus: Large ribosomal subunit protein bL28 (92 aa).

Belongs to the bacterial ribosomal protein bL28 family.

The protein is Large ribosomal subunit protein bL28 of Borreliella burgdorferi (strain ATCC 35210 / DSM 4680 / CIP 102532 / B31) (Borrelia burgdorferi).